The primary structure comprises 661 residues: L-type lectin-domain containing receptor kinase V.5 (661 aa).

The signal sequence occupies residues 1 to 25 (MSRELIILCQPILVLFLTLFYNSHG). Topologically, residues 26 to 282 (YFVSQGSVGI…KTSNRTKTVL (257 aa)) are extracellular. A legume-lectin like region spans residues 30–250 (QGSVGIGFNG…GAIHYLMGWL (221 aa)). N45, N64, N116, N198, and N276 each carry an N-linked (GlcNAc...) asparagine glycan. The chain crosses the membrane as a helical span at residues 283–303 (AVCLTVSVFAAFVASWIGFVF). Over 304–661 (YLRHKKVKEV…TDSSFVSHGR (358 aa)) the chain is Cytoplasmic. Residues 338–596 (FKEKQLLGKG…LGVLCSHQAA (259 aa)) enclose the Protein kinase domain. ATP is bound by residues 344–352 (LGKGGFGQV) and K367. D464 serves as the catalytic Proton acceptor.

In the C-terminal section; belongs to the protein kinase superfamily. Ser/Thr protein kinase family. This sequence in the N-terminal section; belongs to the leguminous lectin family. Autophosphorylated on a Ser residue. As to expression, expressed at low levels in stems, leaves, flowers and siliques.

It localises to the cell membrane. The catalysed reaction is L-seryl-[protein] + ATP = O-phospho-L-seryl-[protein] + ADP + H(+). It catalyses the reaction L-threonyl-[protein] + ATP = O-phospho-L-threonyl-[protein] + ADP + H(+). Functionally, confers resistance to the pathogenic oomycetes Phytophthora infestans and Phytophthora capsici, but confers susceptibility to the pathogenic bacteria Pseudomonas syringae. The chain is L-type lectin-domain containing receptor kinase V.5 from Arabidopsis thaliana (Mouse-ear cress).